A 44-amino-acid chain; its full sequence is Conotoxin Sr5.5 (44 aa).

Residues 1–19 (MRCLPVFVILLLLIASAPS) form the signal peptide. Positions 20–29 (VDDNAKGTQH) are excised as a propeptide.

It belongs to the conotoxin T superfamily. Post-translationally, contains 2 disulfide bonds that can be either 'C1-C3, C2-C4' or 'C1-C4, C2-C3', since these disulfide connectivities have been observed for conotoxins with cysteine framework V (for examples, see AC P0DQQ7 and AC P81755). As to expression, expressed by the venom duct.

The protein resides in the secreted. The sequence is that of Conotoxin Sr5.5 from Conus spurius (Alphabet cone).